Here is a 193-residue protein sequence, read N- to C-terminus: Ribonuclease HII (193 aa).

Residues 15 to 193 enclose the RNase H type-2 domain; the sequence is YIVAGVDEAG…SYHRRSFKSC (179 aa). A divalent metal cation is bound by residues aspartate 21, glutamate 22, and aspartate 112.

The protein belongs to the RNase HII family. Mn(2+) is required as a cofactor. Mg(2+) serves as cofactor.

It localises to the cytoplasm. The enzyme catalyses Endonucleolytic cleavage to 5'-phosphomonoester.. Its function is as follows. Endonuclease that specifically degrades the RNA of RNA-DNA hybrids. This chain is Ribonuclease HII (rnhB), found in Rickettsia prowazekii (strain Madrid E).